The sequence spans 945 residues: Valine--tRNA ligase (945 aa).

The short motif at 42-52 (PNVTGTLHMGH) is the 'HIGH' region element. Positions 552–556 (KMSKS) match the 'KMSKS' region motif. Residue Lys-555 coordinates ATP. Residues 879 to 945 (DKAAETARLS…VQNQLAKLKD (67 aa)) adopt a coiled-coil conformation.

Belongs to the class-I aminoacyl-tRNA synthetase family. ValS type 1 subfamily. In terms of assembly, monomer.

The protein localises to the cytoplasm. It carries out the reaction tRNA(Val) + L-valine + ATP = L-valyl-tRNA(Val) + AMP + diphosphate. In terms of biological role, catalyzes the attachment of valine to tRNA(Val). As ValRS can inadvertently accommodate and process structurally similar amino acids such as threonine, to avoid such errors, it has a 'posttransfer' editing activity that hydrolyzes mischarged Thr-tRNA(Val) in a tRNA-dependent manner. The polypeptide is Valine--tRNA ligase (Neisseria meningitidis serogroup B (strain ATCC BAA-335 / MC58)).